The following is a 1100-amino-acid chain: Collagen alpha-2(I) chain (1100 aa).

The interval 1–982 is disordered; the sequence is QYDGVKAPDP…PGPAGGGYDV (982 aa). Composition is skewed to low complexity over residues 122 to 170, 200 to 209, and 216 to 237; these read EPGA…AAGP, EPGPNGAVGP, and PGNN…AGAP. Pro residues predominate over residues 239–249; that stretch reads FPGPRGGPGPQ. The span at 251-261 shows a compositional bias: low complexity; the sequence is PQGAAGQRGLA. The segment covering 268–277 has biased composition (gly residues); that stretch reads GVKGDGGPKG. Low complexity-rich tracts occupy residues 333–352, 358–385, 435–448, and 460–472; these read MPGA…PGDA, SGPA…AGPA, APGP…TGAT, and QGAS…QGLP. The span at 473-482 shows a compositional bias: gly residues; the sequence is GPAGGAGEAG. The span at 507–517 shows a compositional bias: low complexity; that stretch reads NPGAAGASGPQ. Over residues 530–557 the composition is skewed to gly residues; the sequence is GTDGGKGEPGAAGAAGGPGHQGPGGMPG. A compositionally biased stretch (basic and acidic residues) spans 568–579; sequence KGEKGEGGHRGP. Residues 633 to 646 are compositionally biased toward low complexity; the sequence is PAGAPGFAGPPGAD. The span at 656 to 665 shows a compositional bias: gly residues; sequence GPSGGKGESG. 3 stretches are compositionally biased toward low complexity: residues 666–691, 702–729, and 757–775; these read PSGP…TGAR, FPGA…PAGK, and SGEK…LGLQ. Positions 788–797 are enriched in gly residues; the sequence is GSPGGAGAVG. 2 stretches are compositionally biased toward low complexity: residues 798 to 820 and 854 to 866; these read EAGR…LGLP and AGPT…PGNR. Over residues 867-876 the composition is skewed to gly residues; the sequence is GESGPGGAAG. Low complexity predominate over residues 877-892; the sequence is AVGPAGARGAAGPSGP. Positions 893 to 907 are enriched in basic and acidic residues; it reads RGEKGVAGEKGERGM. Residues 916-935 show a composition bias toward low complexity; that stretch reads LQGMPGPSGPSGDTGSAGPN. Residues 1071 to 1100 form the Fibrillar collagen NC1 domain; it reads TRLPLLDLAPLDLGGADQEFGLDLGPVCFK.

Belongs to the fibrillar collagen family.

The protein resides in the secreted. Its subcellular location is the extracellular space. It localises to the extracellular matrix. This chain is Collagen alpha-2(I) chain, found in Epinephelus caninus (Dogtooth grouper).